The chain runs to 338 residues: Ketol-acid reductoisomerase (NADP(+)) (338 aa).

One can recognise a KARI N-terminal Rossmann domain in the interval 1–181; that stretch reads MNVFYDKDAD…GGGRAGIIET (181 aa). NADP(+) is bound by residues 24 to 27, Arg47, and Ser52; that span reads YGSQ. His107 is an active-site residue. An NADP(+)-binding site is contributed by Gly133. Positions 182–327 constitute a KARI C-terminal knotted domain; it reads NFREETETDL…AKLRAMMPWI (146 aa). Mg(2+) is bound by residues Asp190, Glu194, Glu226, and Glu230. Ser251 serves as a coordination point for substrate.

Belongs to the ketol-acid reductoisomerase family. The cofactor is Mg(2+).

The enzyme catalyses (2R)-2,3-dihydroxy-3-methylbutanoate + NADP(+) = (2S)-2-acetolactate + NADPH + H(+). It catalyses the reaction (2R,3R)-2,3-dihydroxy-3-methylpentanoate + NADP(+) = (S)-2-ethyl-2-hydroxy-3-oxobutanoate + NADPH + H(+). Its pathway is amino-acid biosynthesis; L-isoleucine biosynthesis; L-isoleucine from 2-oxobutanoate: step 2/4. It functions in the pathway amino-acid biosynthesis; L-valine biosynthesis; L-valine from pyruvate: step 2/4. In terms of biological role, involved in the biosynthesis of branched-chain amino acids (BCAA). Catalyzes an alkyl-migration followed by a ketol-acid reduction of (S)-2-acetolactate (S2AL) to yield (R)-2,3-dihydroxy-isovalerate. In the isomerase reaction, S2AL is rearranged via a Mg-dependent methyl migration to produce 3-hydroxy-3-methyl-2-ketobutyrate (HMKB). In the reductase reaction, this 2-ketoacid undergoes a metal-dependent reduction by NADPH to yield (R)-2,3-dihydroxy-isovalerate. The chain is Ketol-acid reductoisomerase (NADP(+)) from Burkholderia cenocepacia (strain ATCC BAA-245 / DSM 16553 / LMG 16656 / NCTC 13227 / J2315 / CF5610) (Burkholderia cepacia (strain J2315)).